Reading from the N-terminus, the 378-residue chain is MKWSVIQALALASGVQAHGYLTFPMSRTGLNAQAGPDTCPECTILEPVTAWPDLDSAQVGRSGPCGYNARVSVDYNQPGPRWGSAPVVTYKGGDVADVQWCVDNNGDHGGMFTYRICQDQALVDKLLTPGYLPSEAEKQAAENCFRAGTLPCTDVNGQSCGYSPDCSPGQACWRNDWFTCKGFQDTKCRGVDNAPLNSCYTSIAGGYTVSSRIKIPNYVSNHTLLSFKWNSFQTPQIYLTCADIKITAPDSQSPPTTTTTSTPASPPPTSCATPAASVAVTFRSKTTTSVGQTVKIAGSIAQLGGWDASKAPALSASQYTSSNPLWTTTISLPAGATFEYKFIRVESSGAVTYESGANRVYTVPRDCAGTATVDTAWK.

The N-terminal stretch at 1–17 is a signal peptide; that stretch reads MKWSVIQALALASGVQA. Position 18 (H18) interacts with Cu(2+). H18 carries the post-translational modification Methylhistidine. Positions 18–244 constitute a Chitin-binding type-4 domain; it reads HGYLTFPMSR…PQIYLTCADI (227 aa). Disulfide bonds link C39-C42, C65-C241, C101-C199, C117-C144, C152-C160, C166-C172, and C180-C188. Cu(2+) is bound at residue H108. A glycan (N-linked (GlcNAc...) asparagine) is linked at N221. Residue Y238 coordinates Cu(2+). A compositionally biased stretch (low complexity) spans 250–263; the sequence is DSQSPPTTTTTSTP. The disordered stretch occupies residues 250 to 272; sequence DSQSPPTTTTTSTPASPPPTSCA. A CBM20 domain is found at 272-378; the sequence is ATPAASVAVT…GTATVDTAWK (107 aa).

The protein belongs to the polysaccharide monooxygenase AA13 family. Cu(2+) serves as cofactor. In terms of processing, O-mannosylated.

It is found in the secreted. The catalysed reaction is starch + reduced acceptor + O2 = D-glucono-1,5-lactone-terminated malto-oligosaccharides + short-chain malto-oligosaccharides + acceptor + H2O.. With respect to regulation, activity is inhibited by both beta-cyclodextrin or amylose that block the access to the active site. Its function is as follows. Starch-active lytic polysaccharide monooxygenase that oxidizes the C1 position of starch substrates. Catalysis by LPMOs requires the reduction of the active-site copper from Cu(II) to Cu(I) by a reducing agent and H(2)O(2) or O(2) as a cosubstrate. The sequence is that of AA13 family lytic polysaccharide monooxygenase A from Pyricularia oryzae (strain 70-15 / ATCC MYA-4617 / FGSC 8958) (Rice blast fungus).